Here is a 135-residue protein sequence, read N- to C-terminus: Sex-regulated protein janus-A (135 aa).

Position 37 (lysine 37) interacts with substrate. The active-site Proton acceptor is histidine 63. Serine 104–glycine 106 contacts substrate.

It belongs to the janus family.

JanA and janB regulate somatic sex differentiation. The chain is Sex-regulated protein janus-A (janA) from Drosophila mauritiana (Fruit fly).